Reading from the N-terminus, the 197-residue chain is Holliday junction branch migration complex subunit RuvA (197 aa).

Residues 1–63 (MFEYLNGKLV…EDAHSLYGFV (63 aa)) form a domain I region. A domain II region spans residues 64-142 (NESEKALFLR…ATGAVGISLL (79 aa)). A flexible linker region spans residues 142–146 (LDAAP). Residues 147-197 (ASNLALEEAIEALQALGYKATELKKIEKKLAQEAGLTSEEYIKSALKLMMK) form a domain III region.

The protein belongs to the RuvA family. As to quaternary structure, homotetramer. Forms an RuvA(8)-RuvB(12)-Holliday junction (HJ) complex. HJ DNA is sandwiched between 2 RuvA tetramers; dsDNA enters through RuvA and exits via RuvB. An RuvB hexamer assembles on each DNA strand where it exits the tetramer. Each RuvB hexamer is contacted by two RuvA subunits (via domain III) on 2 adjacent RuvB subunits; this complex drives branch migration. In the full resolvosome a probable DNA-RuvA(4)-RuvB(12)-RuvC(2) complex forms which resolves the HJ.

The protein localises to the cytoplasm. The RuvA-RuvB-RuvC complex processes Holliday junction (HJ) DNA during genetic recombination and DNA repair, while the RuvA-RuvB complex plays an important role in the rescue of blocked DNA replication forks via replication fork reversal (RFR). RuvA specifically binds to HJ cruciform DNA, conferring on it an open structure. The RuvB hexamer acts as an ATP-dependent pump, pulling dsDNA into and through the RuvAB complex. HJ branch migration allows RuvC to scan DNA until it finds its consensus sequence, where it cleaves and resolves the cruciform DNA. The protein is Holliday junction branch migration complex subunit RuvA of Lactococcus lactis subsp. cremoris (strain MG1363).